The following is a 624-amino-acid chain: Chaperone protein HtpG (624 aa).

The tract at residues 1–338 (MNNKNKITHT…SQDLPLNISR (338 aa)) is a; substrate-binding. Residues 339-552 (EILQDSSITH…TNDMSTQMAK (214 aa)) are b. The interval 553-624 (IFSAAGQPIP…IQRINNFFIS (72 aa)) is c.

Belongs to the heat shock protein 90 family. In terms of assembly, homodimer.

It localises to the cytoplasm. In terms of biological role, molecular chaperone. Has ATPase activity. The sequence is that of Chaperone protein HtpG from Buchnera aphidicola subsp. Cinara cedri (strain Cc).